The primary structure comprises 52 residues: Conotoxin Cal9.2c (52 aa).

The propeptide occupies 1–6 (KKGVTL). 3 cysteine pairs are disulfide-bonded: Cys14/Cys31, Cys19/Cys41, and Cys21/Cys46.

As to expression, expressed by the venom duct.

The protein localises to the secreted. Probable neurotoxin with unknown target. Possibly targets ion channels. In Californiconus californicus (California cone), this protein is Conotoxin Cal9.2c.